The following is a 555-amino-acid chain: Transcription factor kojR (555 aa).

The segment at residues 21–47 is a DNA-binding region (zn(2)-C6 fungal-type); sequence CETCKLRKRKCDGHEPCTYCLRYEYQC. The segment at 51–73 is disordered; the sequence is PHPRRKPAASKSSARPSEEEDSP.

It localises to the nucleus. In terms of biological role, transcription factor that regulates the gene cluster that mediates the biosynthesis of 5-hydroxy-2-hydroxymethyl-1,4-pyrone, also know as kojic acid, a by-product in the fermentation process of malting rice that acts as a chelation agent. Mediates the expression of kojA and kojT via binding of an 11-nucleotide palindromic sequence, 5'-CGRCTWAGYCG-3' (R=A/G, W=A/T, Y=C/T) within the target gene promoters. This chain is Transcription factor kojR, found in Aspergillus flavus (strain ATCC 200026 / FGSC A1120 / IAM 13836 / NRRL 3357 / JCM 12722 / SRRC 167).